Reading from the N-terminus, the 207-residue chain is MLRGMKVVLATGNPGKVRELKEGLAPLGWTLLTLADFALRMPKEEGATFLENALLKAAYVAKATGLPALADDSGLEVYALGGEPGVYSARYGGRATDRERNVYLLERMRHLKGEERKARFVAVLVLAYPDGHAEAYEGSVEGVILEAPRGEGGFGYDPLFYVPEAGKTFAEMGLEEKARYSHRGKALRALLEAYKDGPPPREVSKLE.

11–16 (TGNPGK) provides a ligand contact to substrate. Aspartate 72 acts as the Proton acceptor in catalysis. Aspartate 72 serves as a coordination point for Mg(2+). Substrate-binding positions include serine 73, 154-157 (FGYD), lysine 177, and 182-183 (HR).

Belongs to the HAM1 NTPase family. As to quaternary structure, homodimer. Mg(2+) serves as cofactor.

It catalyses the reaction XTP + H2O = XMP + diphosphate + H(+). The catalysed reaction is dITP + H2O = dIMP + diphosphate + H(+). The enzyme catalyses ITP + H2O = IMP + diphosphate + H(+). Functionally, pyrophosphatase that catalyzes the hydrolysis of nucleoside triphosphates to their monophosphate derivatives, with a high preference for the non-canonical purine nucleotides XTP (xanthosine triphosphate), dITP (deoxyinosine triphosphate) and ITP. Seems to function as a house-cleaning enzyme that removes non-canonical purine nucleotides from the nucleotide pool, thus preventing their incorporation into DNA/RNA and avoiding chromosomal lesions. This is dITP/XTP pyrophosphatase from Thermus thermophilus (strain ATCC 27634 / DSM 579 / HB8).